The following is a 235-amino-acid chain: BPI fold-containing family A member 2 (235 aa).

The signal sequence occupies residues 1–20; sequence MFQLGSLVVLCGLLIGTSES. A disulfide bond links Cys-161 and Cys-204.

This sequence belongs to the BPI/LBP/Plunc superfamily. Plunc family. As to expression, expressed in parotid, submandibular and sublingual glands.

The protein localises to the secreted. Has strong antibacterial activity against P.aeruginosa. The chain is BPI fold-containing family A member 2 (Bpifa2) from Rattus norvegicus (Rat).